Reading from the N-terminus, the 199-residue chain is UPF0301 protein Anae109_0457 (199 aa).

Belongs to the UPF0301 (AlgH) family.

This is UPF0301 protein Anae109_0457 from Anaeromyxobacter sp. (strain Fw109-5).